The sequence spans 536 residues: Heat shock factor protein 2 (536 aa).

Residues Lys-2 and Lys-82 each participate in a glycyl lysine isopeptide (Lys-Gly) (interchain with G-Cter in SUMO2) cross-link. The DNA-binding element occupies 7–112; the sequence is VPAFLSKLWT…LLENIKRKVS (106 aa). The Nuclear localization signal signature appears at 108 to 122; it reads KRKVSSSKPEENKIR. The tract at residues 119 to 192 is hydrophobic repeat HR-A/B; the sequence is NKIRQEDLTK…VTLVQNNQLV (74 aa). Residues Lys-135, Lys-139, Lys-151, Lys-210, Lys-218, and Lys-237 each participate in a glycyl lysine isopeptide (Lys-Gly) (interchain with G-Cter in SUMO2) cross-link. The Nuclear localization signal signature appears at 195–210; sequence KRKRPLLLNTNGAQKK. The disordered stretch occupies residues 300–337; it reads QSGEQNEPARESLSSGSDGSSPLMSSAVQLNGSSSLTS. Over residues 311 to 325 the composition is skewed to low complexity; the sequence is SLSSGSDGSSPLMSS. Residues 326 to 337 are compositionally biased toward polar residues; the sequence is AVQLNGSSSLTS. The interval 360 to 385 is hydrophobic repeat HR-C; it reads LLDYLDSIDCSLEDFQAMLSGRQFSI. Positions 407 to 438 are disordered; it reads NNTKSENKGLETTKNNVVQPVSEEGRKSKSKP. Residues 429 to 438 are compositionally biased toward basic and acidic residues; that stretch reads EEGRKSKSKP.

The protein belongs to the HSF family. As to quaternary structure, DNA-binding homotrimer in stressed or heat shocked cells, otherwise found as a homodimer.

It localises to the cytoplasm. Its subcellular location is the nucleus. Its function is as follows. DNA-binding protein that specifically binds heat shock promoter elements (HSE) and activates transcription. In higher eukaryotes, HSF is unable to bind to the HSE unless the cells are heat shocked. This Homo sapiens (Human) protein is Heat shock factor protein 2 (HSF2).